We begin with the raw amino-acid sequence, 230 residues long: Large ribosomal subunit protein uL1 (230 aa).

The protein belongs to the universal ribosomal protein uL1 family. As to quaternary structure, part of the 50S ribosomal subunit.

Functionally, binds directly to 23S rRNA. The L1 stalk is quite mobile in the ribosome, and is involved in E site tRNA release. Its function is as follows. Protein L1 is also a translational repressor protein, it controls the translation of the L11 operon by binding to its mRNA. This Lactobacillus johnsonii (strain CNCM I-12250 / La1 / NCC 533) protein is Large ribosomal subunit protein uL1.